The chain runs to 337 residues: MDLDQIVADAQQSFEGAADITTLENEKARFLGKSGALTELLKGLGKLDPEARKTEGARINVAKQQVEAALNARRQALADALLNQRLAAEAIDVTLPGRGAGAGSLHPVMRTWERVEQIFRSIGFDVADGPEIETDWYNFTALNSPENHPARSMQDTFYVDGKDADGRRLLLRTHTSPMQVRYARMNRPPIKVIAPGRTYRVDSDATHSPMFNQVEGLWIDENVSFADLKGVYTDFLKKFFERDDILVRFRPSYFPFTEPSAEIDMMFEHGKNAGKWLEISGSGQVHPTVIRNMGLDPERYIGFAFGSGLERLTMLRYGVQDLRLFFENDLRFLRQFA.

Glu-258 lines the Mg(2+) pocket.

It belongs to the class-II aminoacyl-tRNA synthetase family. Phe-tRNA synthetase alpha subunit type 1 subfamily. As to quaternary structure, tetramer of two alpha and two beta subunits. It depends on Mg(2+) as a cofactor.

Its subcellular location is the cytoplasm. The catalysed reaction is tRNA(Phe) + L-phenylalanine + ATP = L-phenylalanyl-tRNA(Phe) + AMP + diphosphate + H(+). The sequence is that of Phenylalanine--tRNA ligase alpha subunit from Burkholderia thailandensis (strain ATCC 700388 / DSM 13276 / CCUG 48851 / CIP 106301 / E264).